A 397-amino-acid chain; its full sequence is Elongation factor Tu (397 aa).

Residues 10-207 form the tr-type G domain; sequence KPHCNIGTIG…AVDEYIPQPE (198 aa). The interval 19–26 is G1; that stretch reads GHVDHGKT. 19-26 is a binding site for GTP; that stretch reads GHVDHGKT. T26 is a Mg(2+) binding site. The G2 stretch occupies residues 61–65; sequence GITIS. The interval 82 to 85 is G3; sequence DCPG. Residues 82-86 and 137-140 each bind GTP; these read DCPGH and NKVD. The G4 stretch occupies residues 137 to 140; that stretch reads NKVD. A G5 region spans residues 175-177; it reads SAL.

This sequence belongs to the TRAFAC class translation factor GTPase superfamily. Classic translation factor GTPase family. EF-Tu/EF-1A subfamily. In terms of assembly, monomer.

Its subcellular location is the cytoplasm. The catalysed reaction is GTP + H2O = GDP + phosphate + H(+). Functionally, GTP hydrolase that promotes the GTP-dependent binding of aminoacyl-tRNA to the A-site of ribosomes during protein biosynthesis. In Zymomonas mobilis subsp. mobilis (strain ATCC 31821 / ZM4 / CP4), this protein is Elongation factor Tu.